The primary structure comprises 380 residues: Flap endonuclease 1 (380 aa).

The N-domain stretch occupies residues 1-104; it reads MGIQGLAKLI…GELAKRAERR (104 aa). D34 is a Mg(2+) binding site. DNA is bound by residues R47 and R70. Residues D86, E158, E160, D179, and D181 each coordinate Mg(2+). Positions 122–253 are I-domain; the sequence is DVNKFQKRLV…KRAIELIRQY (132 aa). Residue E158 participates in DNA binding. Residues G231 and D233 each coordinate DNA. D233 serves as a coordination point for Mg(2+). The interval 328 to 380 is disordered; sequence LKNARHTSTQGRLDSFFKVMSSPSVKRKEPPKGAKGSASKKAKMSGGKFKKPK. The tract at residues 336 to 344 is interaction with PCNA; that stretch reads TQGRLDSFF. Basic residues predominate over residues 365 to 380; the sequence is ASKKAKMSGGKFKKPK.

The protein belongs to the XPG/RAD2 endonuclease family. FEN1 subfamily. As to quaternary structure, interacts with PCNA. Three molecules of FEN1 bind to one PCNA trimer with each molecule binding to one PCNA monomer. PCNA stimulates the nuclease activity without altering cleavage specificity. The cofactor is Mg(2+). Post-translationally, phosphorylated. Phosphorylation upon DNA damage induces relocalization to the nuclear plasma.

The protein resides in the nucleus. The protein localises to the nucleolus. Its subcellular location is the nucleoplasm. It localises to the mitochondrion. In terms of biological role, structure-specific nuclease with 5'-flap endonuclease and 5'-3' exonuclease activities involved in DNA replication and repair. During DNA replication, cleaves the 5'-overhanging flap structure that is generated by displacement synthesis when DNA polymerase encounters the 5'-end of a downstream Okazaki fragment. It enters the flap from the 5'-end and then tracks to cleave the flap base, leaving a nick for ligation. Also involved in the long patch base excision repair (LP-BER) pathway, by cleaving within the apurinic/apyrimidinic (AP) site-terminated flap. Acts as a genome stabilization factor that prevents flaps from equilibrating into structures that lead to duplications and deletions. Also possesses 5'-3' exonuclease activity on nicked or gapped double-stranded DNA, and exhibits RNase H activity. Also involved in replication and repair of rDNA and in repairing mitochondrial DNA. The polypeptide is Flap endonuclease 1 (Branchiostoma floridae (Florida lancelet)).